We begin with the raw amino-acid sequence, 233 residues long: Snake venom serine protease ussurase (233 aa).

Residues 1 to 224 enclose the Peptidase S1 domain; the sequence is VIGGVECNIN…YTDWIQSIIS (224 aa). Disulfide bonds link C7/C138, C25/C41, C73/C231, C117/C185, C149/C164, and C175/C200. Residue H40 is the Charge relay system of the active site. N54 is a glycosylation site (N-linked (GlcNAc...) asparagine). The active-site Charge relay system is D85. The Charge relay system role is filled by S179.

It belongs to the peptidase S1 family. Snake venom subfamily. As to quaternary structure, monomer. As to expression, expressed by the venom gland.

Its subcellular location is the secreted. Functionally, snake venom serine protease that may act in the hemostasis system of the prey. The polypeptide is Snake venom serine protease ussurase (Gloydius ussuriensis (Ussuri mamushi)).